Here is a 383-residue protein sequence, read N- to C-terminus: Adaptive-response sensory kinase SasA (383 aa).

Residues 161 to 383 (MLAHDLRSPL…SFHFTLPVYR (223 aa)) enclose the Histidine kinase domain. Position 164 is a phosphohistidine; by autocatalysis (H164).

As to quaternary structure, homooligomerizes. Interacts with KaiC1. Interacts with KaiC1 and RpaA. Binds to the B-loop in the CI domain of KaiC; SasA and KaiB compete to bind to the CI domain.

The enzyme catalyses ATP + protein L-histidine = ADP + protein N-phospho-L-histidine.. In terms of biological role, member of the two-component regulatory system SasA/RpaA involved in genome-wide circadian gene expression. One of several clock output pathways. Participates in the Kai clock protein complex, the main circadian regulator in cyanobacteria, via its interaction with KaiC. KaiC enhances the autophosphorylation activity of SasA, which then transfers its phosphate group to RpaA to activate it. In addition to its output function, recruits fold-shifted KaiB (KaiB(fs)) to KaiC to cooperatively form the KaiB(6):KaiC(6) complex (independent of SasA kinase activity). Required for robustness of the circadian rhythm of gene expression and is involved in clock output, also required for adaptation to light/dark cycles. Its function is as follows. Plays an important role in glucose metabolism, important for expression of genes involved in glycolysis, gluconeogenesis, the oxidative pentose phosphate pathway, and glycogen metabolism. Required for heterotrophic growth. Overexpression from the psbAII promoter leads to altered levels of genes involved in carbon metabolism, increased levels of transcripts for clock oscillator genes in the light and the dark, complete loss of glycogen accumulation, decreased levels of metabolites of sugar catabolism and increased levels of amino acids in the light and increased levels of SigE protein. The polypeptide is Adaptive-response sensory kinase SasA (Synechocystis sp. (strain ATCC 27184 / PCC 6803 / Kazusa)).